A 157-amino-acid chain; its full sequence is Transcription elongation factor GreB (157 aa).

It belongs to the GreA/GreB family. GreB subfamily.

Its function is as follows. Necessary for efficient RNA polymerase transcription elongation past template-encoded arresting sites. The arresting sites in DNA have the property of trapping a certain fraction of elongating RNA polymerases that pass through, resulting in locked ternary complexes. Cleavage of the nascent transcript by cleavage factors such as GreA or GreB allows the resumption of elongation from the new 3'terminus. GreB releases sequences of up to 9 nucleotides in length. The sequence is that of Transcription elongation factor GreB from Salmonella typhimurium (strain LT2 / SGSC1412 / ATCC 700720).